The sequence spans 280 residues: Bifunctional protein FolD (280 aa).

NADP(+)-binding positions include 166–168 (GRS) and serine 191.

The protein belongs to the tetrahydrofolate dehydrogenase/cyclohydrolase family. In terms of assembly, homodimer.

The enzyme catalyses (6R)-5,10-methylene-5,6,7,8-tetrahydrofolate + NADP(+) = (6R)-5,10-methenyltetrahydrofolate + NADPH. The catalysed reaction is (6R)-5,10-methenyltetrahydrofolate + H2O = (6R)-10-formyltetrahydrofolate + H(+). It participates in one-carbon metabolism; tetrahydrofolate interconversion. Catalyzes the oxidation of 5,10-methylenetetrahydrofolate to 5,10-methenyltetrahydrofolate and then the hydrolysis of 5,10-methenyltetrahydrofolate to 10-formyltetrahydrofolate. The polypeptide is Bifunctional protein FolD (Marinomonas sp. (strain MWYL1)).